We begin with the raw amino-acid sequence, 177 residues long: NADH-quinone oxidoreductase subunit B (177 aa).

4 residues coordinate [4Fe-4S] cluster: Cys56, Cys57, Cys121, and Cys151.

It belongs to the complex I 20 kDa subunit family. NDH-1 is composed of 14 different subunits. Subunits NuoB, C, D, E, F, and G constitute the peripheral sector of the complex. [4Fe-4S] cluster serves as cofactor.

The protein localises to the cell inner membrane. It catalyses the reaction a quinone + NADH + 5 H(+)(in) = a quinol + NAD(+) + 4 H(+)(out). NDH-1 shuttles electrons from NADH, via FMN and iron-sulfur (Fe-S) centers, to quinones in the respiratory chain. Couples the redox reaction to proton translocation (for every two electrons transferred, four hydrogen ions are translocated across the cytoplasmic membrane), and thus conserves the redox energy in a proton gradient. The protein is NADH-quinone oxidoreductase subunit B of Ruegeria pomeroyi (strain ATCC 700808 / DSM 15171 / DSS-3) (Silicibacter pomeroyi).